The following is a 164-amino-acid chain: Peptidyl-prolyl cis-trans isomerase A-like 4D (164 aa).

A PPIase cyclophilin-type domain is found at 7-163; it reads FFEITRDGKP…KKITIADCGQ (157 aa).

It belongs to the cyclophilin-type PPIase family. PPIase A subfamily.

Its subcellular location is the cytoplasm. The enzyme catalyses [protein]-peptidylproline (omega=180) = [protein]-peptidylproline (omega=0). Its function is as follows. PPIases accelerate the folding of proteins. It catalyzes the cis-trans isomerization of proline imidic peptide bonds in oligopeptides. The protein is Peptidyl-prolyl cis-trans isomerase A-like 4D of Homo sapiens (Human).